The following is a 367-amino-acid chain: Cell division protein FtsZ (367 aa).

Residues Gly-17 to Asn-21, Gly-104 to Gly-106, Glu-135, Lys-139, and Asp-183 each bind GTP.

This sequence belongs to the FtsZ family. Homodimer. Polymerizes to form a dynamic ring structure in a strictly GTP-dependent manner. Interacts directly with several other division proteins.

It is found in the cytoplasm. In terms of biological role, essential cell division protein that forms a contractile ring structure (Z ring) at the future cell division site. The regulation of the ring assembly controls the timing and the location of cell division. One of the functions of the FtsZ ring is to recruit other cell division proteins to the septum to produce a new cell wall between the dividing cells. Binds GTP and shows GTPase activity. This Aquifex aeolicus (strain VF5) protein is Cell division protein FtsZ.